The chain runs to 513 residues: CUGBP Elav-like family member 1 (513 aa).

A Phosphothreonine modification is found at Thr-31. RRM domains follow at residues 43–126 (IKMF…PADS) and 135–215 (RKLF…FADT). A Glycyl lysine isopeptide (Lys-Gly) (interchain with G-Cter in SUMO2) cross-link involves residue Lys-136. Residues Ser-206 and Ser-329 each carry the phosphoserine modification. A disordered region spans residues 304–336 (TPSGTNALTTSSSPLSVLTSSGSSPSSSSSNSV). A compositionally biased stretch (low complexity) spans 311–336 (LTTSSSPLSVLTSSGSSPSSSSSNSV). Positions 428 to 506 (ANLFIYHLPQ…KRLKVQLKRS (79 aa)) constitute an RRM 3 domain.

The protein belongs to the CELF/BRUNOL family. Associates with polysomes. Interacts with HNRNPH1; the interaction in RNA-dependent. Interacts with PARN. Component of an EIF2 complex at least composed of CELF1/CUGBP1, CALR, CALR3, EIF2S1, EIF2S2, HSP90B1 and HSPA5.

The protein resides in the nucleus. The protein localises to the cytoplasm. In terms of biological role, RNA-binding protein implicated in the regulation of several post-transcriptional events. Involved in pre-mRNA alternative splicing, mRNA translation and stability. Mediates exon inclusion and/or exclusion in pre-mRNA that are subject to tissue-specific and developmentally regulated alternative splicing. Specifically activates exon 5 inclusion of cardiac isoforms of TNNT2 during heart remodeling at the juvenile to adult transition. Acts both as an activator and as a repressor of a pair of coregulated exons: promotes inclusion of the smooth muscle (SM) exon but exclusion of the non-muscle (NM) exon in actinin pre-mRNAs. Activates SM exon 5 inclusion by antagonizing the repressive effect of PTB. Promotes exclusion of exon 11 of the INSR pre-mRNA. Inhibits, together with HNRNPH1, insulin receptor (IR) pre-mRNA exon 11 inclusion in myoblast. Increases translation and controls the choice of translation initiation codon of CEBPB mRNA. Increases mRNA translation of CEBPB in aging liver. Increases translation of CDKN1A mRNA by antagonizing the repressive effect of CALR3. Mediates rapid cytoplasmic mRNA deadenylation. Recruits the deadenylase PARN to the poly(A) tail of EDEN-containing mRNAs to promote their deadenylation. Required for completion of spermatogenesis. Binds to (CUG)n triplet repeats in the 3'-UTR of transcripts such as DMPK and to Bruno response elements (BREs). Binds to muscle-specific splicing enhancer (MSE) intronic sites flanking the alternative exon 5 of TNNT2 pre-mRNA. Binds to AU-rich sequences (AREs or EDEN-like) localized in the 3'-UTR of JUN and FOS mRNAs. Binds to the IR RNA. Binds to the 5'-region of CDKN1A and CEBPB mRNAs. Binds with the 5'-region of CEBPB mRNA in aging liver. May be a specific regulator of miRNA biogenesis. Binds to primary microRNA pri-MIR140 and, with CELF2, negatively regulates the processing to mature miRNA. The chain is CUGBP Elav-like family member 1 (CELF1) from Pongo abelii (Sumatran orangutan).